Here is a 665-residue protein sequence, read N- to C-terminus: Probable potassium transport system protein Kup (665 aa).

The span at 1-18 shows a compositional bias: low complexity; it reads MASEAPHASAPDCAPASS. Positions 1 to 31 are disordered; the sequence is MASEAPHASAPDCAPASSDIPQQDGGSTNGH. 12 consecutive transmembrane segments (helical) span residues 40-60, 83-103, 131-151, 171-191, 202-222, 245-265, 281-301, 332-352, 380-400, 409-429, 435-455, and 462-482; these read FFAL…TSPL, VVSL…VVFI, LVFV…VITP, GVTN…LFFI, LFGP…LMNL, GLTG…VEAL, WLFF…AFAL, LVLL…TGAF, IFVP…MFTF, AYGL…FIVM, WSMP…ITFL, and FFSG…IMAT.

It belongs to the HAK/KUP transporter (TC 2.A.72) family.

Its subcellular location is the cell inner membrane. It carries out the reaction K(+)(in) + H(+)(in) = K(+)(out) + H(+)(out). Its function is as follows. Transport of potassium into the cell. Likely operates as a K(+):H(+) symporter. The sequence is that of Probable potassium transport system protein Kup from Caulobacter vibrioides (strain ATCC 19089 / CIP 103742 / CB 15) (Caulobacter crescentus).